The chain runs to 906 residues: Probable helicase HelY (906 aa).

The region spanning 26–184 (CSALERGHGV…WIQTVRGDTT (159 aa)) is the Helicase ATP-binding domain. 39-46 (APTGAGKT) is a binding site for ATP. A DEVH box motif is present at residues 132 to 135 (DEVH). The region spanning 259-463 (GRPEVIAKLD…SYNMTINLVH (205 aa)) is the Helicase C-terminal domain.

It belongs to the helicase family. SKI2 subfamily.

The polypeptide is Probable helicase HelY (helY) (Mycobacterium tuberculosis (strain CDC 1551 / Oshkosh)).